We begin with the raw amino-acid sequence, 624 residues long: MKGQETRGFQSEVKQLLHLMIHSLYSNKEIFLRELISNASDAADKLRFRALSSPDLYEGDGDLRVRVSFDKDKRTLTIADNGIGMTRDEVIDHLGTIAKSGTKAFLESMGSDQAKDSQLIGQFGVGFYSAFIVADKVTVRTRAAGVSADEAVFWESEGEGEYTVADISKADRGTEITLHLREGEDEFLNDWRVRSIISKYSDHIALPVEIETREEKDGETIVSWEKINKAQALWTRSKGEVSDDEYKAFYKHIAHDFTDPLTWSHNRVEGKQEYTSLLYIPSQAPWDMWNRDHKHGLKLYVQRVFIMDDAEQFMPNYLRFVRGLIDSNDLPLNVSREILQDSSITRNLRSALTKRVLQMLEKLAKDDAEKYQTFWKQFGLVLKEGPAEDSANQEAIAKLLRFASTHTDSAAQTVSLADYVSRMKEGQEKIYYITADSYAAAKSSPHLELLRKKGIEVLLLSDRIDEWMMSYLTEFDGKAFQSVAKADESLEKLADEVDESAKEAEKALEPFVERVKTLLGDRVKEVRLTHRLTDTPAIVTTDNDEMSTQMAKLFAAAGQAVPEVKYIFELNPDHQLVKRTADTQDEAQFKEWVELLLDQALFAERGTLEDPNQFIRRMNQLLVS.

Residues 1 to 336 (MKGQETRGFQ…SNDLPLNVSR (336 aa)) are a; substrate-binding. The b stretch occupies residues 337–552 (EILQDSSITR…NDEMSTQMAK (216 aa)). Positions 553–624 (LFAAAGQAVP…IRRMNQLLVS (72 aa)) are c.

It belongs to the heat shock protein 90 family. In terms of assembly, homodimer.

Its subcellular location is the cytoplasm. Molecular chaperone. Has ATPase activity. The chain is Chaperone protein HtpG from Cronobacter sakazakii (strain ATCC BAA-894) (Enterobacter sakazakii).